The following is a 688-amino-acid chain: MTTQNFLVEIGTEELPPKALKTLATSFADNVEAELNQAGLTFDKIEWFAAPRRLAVKVLNLAKQQPSKEIEKRGPAVSAAFDAEGKPTKAAEGWARGCGITVEQAERIATDKGEWLVHRAKIEGQPTKNLLNDIVANALAKLPIPKPMRWADKTVQFIRPVHTVTMLLGDELIEGEILGVASARTIRGHRFLGEKEFDIQHADQYPQLLRDKGSVVADFNERKAEILAKSQAKATALGGVADIEESLLEEVTSLVEYPNVLAAKFEERFLAVPAEALVYTMKGDQKYFPIYDKDGRLLPHFIFVSNINPEDPTAIIEGNEKVVRPRLTDAEFFFKTDLKQKLVDRLPRLETVLFQQQLGTLKDKTDRIEQLAGEIAKQIGTDEAKAKRAGLLSKCDLMTNMVFEFTDTQGVMGMHYARHDGEDEEVAVALNEQYMPRFAGDELPKSLVASAVALADKFDTLTGIFGIGQAPKGSADPFALRRAALGALRIIVEKNLPLDLEDLVKKSAALFGDKLTNQNVVADVVDFMLGRFRAWYQDEGIEVDVIQAVLARRPTRPADFDARVRAVSHFRTLDSAEALAAANKRVSNILAKADAAIGEINLTVCVEQAEKALAEAVLALRTEVQPLIAQGDYTTVLDKLANLRAPVDSFFDNVMVNAEDPALRQNRLAILNTLQGLFLQVADISVLQ.

This sequence belongs to the class-II aminoacyl-tRNA synthetase family. As to quaternary structure, tetramer of two alpha and two beta subunits.

The protein resides in the cytoplasm. The catalysed reaction is tRNA(Gly) + glycine + ATP = glycyl-tRNA(Gly) + AMP + diphosphate. The protein is Glycine--tRNA ligase beta subunit of Haemophilus influenzae (strain PittGG).